The following is a 321-amino-acid chain: tRNA U34 carboxymethyltransferase (321 aa).

Residues Lys-90, Trp-104, Lys-109, Gly-129, 151–153 (DPT), 180–181 (IE), Met-195, Tyr-199, and Arg-314 each bind carboxy-S-adenosyl-L-methionine.

This sequence belongs to the class I-like SAM-binding methyltransferase superfamily. CmoB family. Homotetramer.

The catalysed reaction is carboxy-S-adenosyl-L-methionine + 5-hydroxyuridine(34) in tRNA = 5-carboxymethoxyuridine(34) in tRNA + S-adenosyl-L-homocysteine + H(+). Its function is as follows. Catalyzes carboxymethyl transfer from carboxy-S-adenosyl-L-methionine (Cx-SAM) to 5-hydroxyuridine (ho5U) to form 5-carboxymethoxyuridine (cmo5U) at position 34 in tRNAs. The chain is tRNA U34 carboxymethyltransferase from Pasteurella multocida (strain Pm70).